The sequence spans 134 residues: Shikimate kinase (134 aa).

This sequence belongs to the shikimate kinase family.

It localises to the cytoplasm. The enzyme catalyses shikimate + ATP = 3-phosphoshikimate + ADP + H(+). Its pathway is metabolic intermediate biosynthesis; chorismate biosynthesis; chorismate from D-erythrose 4-phosphate and phosphoenolpyruvate: step 5/7. The sequence is that of Shikimate kinase (aroK) from Neisseria gonorrhoeae.